A 101-amino-acid polypeptide reads, in one-letter code: NADH-quinone oxidoreductase subunit K (101 aa).

3 helical membrane passes run 4 to 24 (LSHY…GIFL), 30 to 50 (IILL…FVAF), and 61 to 81 (IFVF…LAIL).

Belongs to the complex I subunit 4L family. NDH-1 is composed of 14 different subunits. Subunits NuoA, H, J, K, L, M, N constitute the membrane sector of the complex.

The protein resides in the cell inner membrane. The enzyme catalyses a quinone + NADH + 5 H(+)(in) = a quinol + NAD(+) + 4 H(+)(out). In terms of biological role, NDH-1 shuttles electrons from NADH, via FMN and iron-sulfur (Fe-S) centers, to quinones in the respiratory chain. The immediate electron acceptor for the enzyme in this species is believed to be ubiquinone. Couples the redox reaction to proton translocation (for every two electrons transferred, four hydrogen ions are translocated across the cytoplasmic membrane), and thus conserves the redox energy in a proton gradient. This chain is NADH-quinone oxidoreductase subunit K, found in Nitrosomonas europaea (strain ATCC 19718 / CIP 103999 / KCTC 2705 / NBRC 14298).